We begin with the raw amino-acid sequence, 138 residues long: Hexon-interlacing protein (138 aa).

Residues 100 to 127 (LLVLLAQLEALTQRLGELSKQVAQLREQ) are a coiled coil.

It belongs to the adenoviridae hexon-interlacing protein family. In terms of assembly, homotrimer. Interacts with hexon protein; this interaction tethers the hexons together. Self-interacts with adjacent proteins. Interacts with kinesin light chain KLC1; this interaction leads to capsid disruption at the nuclear pore complex during virus entry into host cell.

It is found in the virion. The protein resides in the host nucleus. In terms of biological role, structural component of the virion that acts as a cement protein on the capsid exterior and forms triskelion structures consisting of three molecules that stabilize three hexon trimers at the center of each icosahedral facet and fixes the peripentonal hexons. Dispensable for assembly. During virus entry, recruits the anterograde motor kinesin-1 to the capsid docked at the nuclear pore complex thereby subjecting the docked capsid to a pulling force. The resulting tension leads to capsid disruption, dispersion of capsid fragments toward cell periphery and eventually viral DNA entry into the host nucleus. This chain is Hexon-interlacing protein, found in Human adenovirus B serotype 7 (HAdV-7).